Reading from the N-terminus, the 421-residue chain is Tyrosine--tRNA ligase (421 aa).

Tyrosine 38 provides a ligand contact to L-tyrosine. The short motif at 43-52 (PTGDSLHIGH) is the 'HIGH' region element. Residues tyrosine 169 and glutamine 173 each coordinate L-tyrosine. The 'KMSKS' region signature appears at 231–235 (KFGKS). Lysine 234 lines the ATP pocket. An S4 RNA-binding domain is found at 353–419 (KNLVDFLVDT…GKKKYTLVHI (67 aa)).

The protein belongs to the class-I aminoacyl-tRNA synthetase family. TyrS type 1 subfamily. As to quaternary structure, homodimer.

The protein localises to the cytoplasm. The enzyme catalyses tRNA(Tyr) + L-tyrosine + ATP = L-tyrosyl-tRNA(Tyr) + AMP + diphosphate + H(+). Functionally, catalyzes the attachment of tyrosine to tRNA(Tyr) in a two-step reaction: tyrosine is first activated by ATP to form Tyr-AMP and then transferred to the acceptor end of tRNA(Tyr). The chain is Tyrosine--tRNA ligase from Lactobacillus delbrueckii subsp. bulgaricus (strain ATCC BAA-365 / Lb-18).